Here is a 1374-residue protein sequence, read N- to C-terminus: DNA-directed RNA polymerase subunit beta' (1374 aa).

The disordered stretch occupies residues 1 to 47; sequence MTSTSPKSRKPSTKTTKSKSKSKSKSKAAKAAAAGASPALARTPPQF. Positions 7 to 28 are enriched in basic residues; the sequence is KSRKPSTKTTKSKSKSKSKSKA. Positions 29-39 are enriched in low complexity; it reads AKAAAAGASPA. Residues cysteine 258, cysteine 325, cysteine 332, and cysteine 335 each coordinate Zn(2+). Residues 1344–1374 form a disordered region; it reads RPTGENELEEEQLPDPSALEGLQQEGLLTEE. Residues 1362–1374 show a composition bias toward low complexity; it reads LEGLQQEGLLTEE.

The protein belongs to the RNA polymerase beta' chain family. RpoC2 subfamily. As to quaternary structure, in cyanobacteria the RNAP catalytic core is composed of 2 alpha, 1 beta, 1 beta', 1 gamma and 1 omega subunit. When a sigma factor is associated with the core the holoenzyme is formed, which can initiate transcription. The cofactor is Zn(2+).

The enzyme catalyses RNA(n) + a ribonucleoside 5'-triphosphate = RNA(n+1) + diphosphate. In terms of biological role, DNA-dependent RNA polymerase catalyzes the transcription of DNA into RNA using the four ribonucleoside triphosphates as substrates. The polypeptide is DNA-directed RNA polymerase subunit beta' (Prochlorococcus marinus (strain MIT 9313)).